The chain runs to 269 residues: Putative pyruvate, phosphate dikinase regulatory protein (269 aa).

147 to 154 (GVSRSSKT) is an ADP binding site.

Belongs to the pyruvate, phosphate/water dikinase regulatory protein family. PDRP subfamily.

It catalyses the reaction N(tele)-phospho-L-histidyl/L-threonyl-[pyruvate, phosphate dikinase] + ADP = N(tele)-phospho-L-histidyl/O-phospho-L-threonyl-[pyruvate, phosphate dikinase] + AMP + H(+). The enzyme catalyses N(tele)-phospho-L-histidyl/O-phospho-L-threonyl-[pyruvate, phosphate dikinase] + phosphate + H(+) = N(tele)-phospho-L-histidyl/L-threonyl-[pyruvate, phosphate dikinase] + diphosphate. Its function is as follows. Bifunctional serine/threonine kinase and phosphorylase involved in the regulation of the pyruvate, phosphate dikinase (PPDK) by catalyzing its phosphorylation/dephosphorylation. The chain is Putative pyruvate, phosphate dikinase regulatory protein from Trichlorobacter lovleyi (strain ATCC BAA-1151 / DSM 17278 / SZ) (Geobacter lovleyi).